Consider the following 258-residue polypeptide: Small ribosomal subunit protein uS3 (258 aa).

Positions 16-85 constitute a KH type-2 domain; that stretch reads IDEYLEKELE…NPQVEVKEVD (70 aa). The tract at residues 198–258 is disordered; that stretch reads RVTETPAEEA…KDADGEESEK (61 aa). Residues 203–245 are compositionally biased toward acidic residues; sequence PAEEASEASEVVEDLEEVEDLEEIEDLEEVEDLEEVEDLEDTE.

Belongs to the universal ribosomal protein uS3 family. As to quaternary structure, part of the 30S ribosomal subunit.

Functionally, binds the lower part of the 30S subunit head. The protein is Small ribosomal subunit protein uS3 of Methanothermobacter thermautotrophicus (strain ATCC 29096 / DSM 1053 / JCM 10044 / NBRC 100330 / Delta H) (Methanobacterium thermoautotrophicum).